The primary structure comprises 122 residues: Large ribosomal subunit protein bL12 (122 aa).

It belongs to the bacterial ribosomal protein bL12 family. As to quaternary structure, homodimer. Part of the ribosomal stalk of the 50S ribosomal subunit. Forms a multimeric L10(L12)X complex, where L10 forms an elongated spine to which 2 to 4 L12 dimers bind in a sequential fashion. Binds GTP-bound translation factors.

Its function is as follows. Forms part of the ribosomal stalk which helps the ribosome interact with GTP-bound translation factors. Is thus essential for accurate translation. The chain is Large ribosomal subunit protein bL12 from Vibrio vulnificus (strain CMCP6).